The chain runs to 313 residues: tRNA dimethylallyltransferase (313 aa).

9-16 (GPTATGKS) lines the ATP pocket. Position 11 to 16 (11 to 16 (TATGKS)) interacts with substrate.

Belongs to the IPP transferase family. Monomer. Mg(2+) serves as cofactor.

The enzyme catalyses adenosine(37) in tRNA + dimethylallyl diphosphate = N(6)-dimethylallyladenosine(37) in tRNA + diphosphate. Catalyzes the transfer of a dimethylallyl group onto the adenine at position 37 in tRNAs that read codons beginning with uridine, leading to the formation of N6-(dimethylallyl)adenosine (i(6)A). The protein is tRNA dimethylallyltransferase of Nocardia farcinica (strain IFM 10152).